Here is a 1144-residue protein sequence, read N- to C-terminus: Adenylate cyclase type 3 (1144 aa).

The Cytoplasmic portion of the chain corresponds to methionine 1–leucine 79. Helical transmembrane passes span valine 80–phenylalanine 100, leucine 105–cysteine 125, valine 139–phenylalanine 159, alanine 173–isoleucine 193, and isoleucine 226–methionine 246. Mg(2+) contacts are provided by aspartate 324, isoleucine 325, and aspartate 368. ATP contacts are provided by residues aspartate 324–threonine 329 and leucine 366–aspartate 368. A helical transmembrane segment spans residues glutamate 381–valine 401. Topologically, residues arginine 402–serine 630 are cytoplasmic. Arginine 412 contributes to the ATP binding site. Lysine 465 participates in a covalent cross-link: Glycyl lysine isopeptide (Lys-Gly) (interchain with G-Cter in SUMO3). Residues glutamine 504–arginine 563 form a disordered region. At serine 523 the chain carries Phosphoserine. The span at glycine 534–serine 543 shows a compositional bias: low complexity. Phosphoserine is present on serine 578. Transmembrane regions (helical) follow at residues glycine 631–isoleucine 651, phenylalanine 662–proline 682, and tryptophan 706–leucine 726. Asparagine 734 is a glycosylation site (N-linked (GlcNAc...) asparagine). 3 helical membrane-spanning segments follow: residues valine 755–leucine 775, leucine 777–phenylalanine 797, and leucine 833–phenylalanine 853. Topologically, residues tyrosine 854–proline 1144 are cytoplasmic. ATP contacts are provided by residues lysine 975, aspartate 1062–tryptophan 1064, and asparagine 1069–arginine 1073. Serine 1076 bears the Phosphoserine; by CaMK2 mark. Lysine 1109 contributes to the ATP binding site.

It belongs to the adenylyl cyclase class-4/guanylyl cyclase family. It depends on Mg(2+) as a cofactor. The cofactor is Mn(2+). In terms of processing, N-glycosylated. Post-translationally, sumoylated. Sumoylation is required for targeting ot olfactory cilia. Rapidly phosphorylated after stimulation by odorants or forskolin. Phosphorylation by CaMK2 at Ser-1076 down-regulates enzyme activity. In terms of tissue distribution, detected on cilia on the olfactory epithelium (at protein level). Detected on cilia on the olfactory epithelium.

It localises to the cell membrane. It is found in the golgi apparatus. Its subcellular location is the cell projection. The protein localises to the cilium. The protein resides in the cytoplasm. The enzyme catalyses ATP = 3',5'-cyclic AMP + diphosphate. With respect to regulation, specifically activated by the G alpha protein GNAL/G(olf) in signaling cascades triggered by odorant receptors. Activated by forskolin. After forskolin treatment, activity is further increased by calcium/calmodulin. In the absence of forskolin, calcium/calmodulin has little effect on enzyme activity. In terms of biological role, catalyzes the formation of the signaling molecule cAMP in response to G-protein signaling. Participates in signaling cascades triggered by odorant receptors via its function in cAMP biosynthesis: specifically activated by G alpha protein GNAL/G(olf) in olfactory epithelium. Required for the perception of odorants. Required for normal sperm motility and normal male fertility. Plays a role in regulating insulin levels and body fat accumulation in response to a high fat diet. In Rattus norvegicus (Rat), this protein is Adenylate cyclase type 3.